A 154-amino-acid chain; its full sequence is Large ribosomal subunit protein uL13 (154 aa).

The protein belongs to the universal ribosomal protein uL13 family. In terms of assembly, part of the 50S ribosomal subunit.

Its function is as follows. This protein is one of the early assembly proteins of the 50S ribosomal subunit, although it is not seen to bind rRNA by itself. It is important during the early stages of 50S assembly. The polypeptide is Large ribosomal subunit protein uL13 (Mesorhizobium japonicum (strain LMG 29417 / CECT 9101 / MAFF 303099) (Mesorhizobium loti (strain MAFF 303099))).